The chain runs to 321 residues: Ribose-phosphate pyrophosphokinase 1 (321 aa).

Mg(2+) contacts are provided by Asp-131, His-133, Asp-142, and Asp-146.

This sequence belongs to the ribose-phosphate pyrophosphokinase family.

It catalyses the reaction D-ribose 5-phosphate + ATP = 5-phospho-alpha-D-ribose 1-diphosphate + AMP + H(+). This Candida albicans (Yeast) protein is Ribose-phosphate pyrophosphokinase 1 (PRS1).